Reading from the N-terminus, the 213-residue chain is Probable nicotinate-nucleotide adenylyltransferase (213 aa).

Belongs to the NadD family.

It catalyses the reaction nicotinate beta-D-ribonucleotide + ATP + H(+) = deamido-NAD(+) + diphosphate. It functions in the pathway cofactor biosynthesis; NAD(+) biosynthesis; deamido-NAD(+) from nicotinate D-ribonucleotide: step 1/1. Its function is as follows. Catalyzes the reversible adenylation of nicotinate mononucleotide (NaMN) to nicotinic acid adenine dinucleotide (NaAD). In Citrobacter koseri (strain ATCC BAA-895 / CDC 4225-83 / SGSC4696), this protein is Probable nicotinate-nucleotide adenylyltransferase.